The following is a 531-amino-acid chain: MFKAIRRVFTMIPRIQLTEKETRICNLLKDYTAHYNSLHYGQEPLTLRITGGWVRDKLLGQGSHDLDIAINIMSGEEFATGLNGYLLEHFDKYGVKPHSIHKIDKNPEKSKHLETATTKLFDVEVDFVNLRSEEYTEDSRIPTTQFGTPEEDALRRDATLNALFYNIQQDAVEDFTKRGWQDLQDGVLRTPLPARQTFLDDPLRVLRLIRFASRFNFNIEAGVLKEMHDPEINEAFNNKISRERIGVEMEKILVGPNPILGLKLIQRTHLENVIFLWHGDQSVIEYNRKNWPQTKDVEDIYKKGIFNHHLKNFIHHYKDFLSRYLKLRQAIETKDKSFQQNFLLASILIPMADLKIIALPKKKLNNTLPVSESIVREGLKFNKASSIVVARCVENIAAYNSMVEKYLQSGDLKRSEVGTFLRELRGDWEIVHYVSLMDQYLKYISRKDNVVNIIDKYDRFWNYIQEQNLQDSDKMVPIIDGKRMVKILETKPGPWLGKINDEVILWQFDHPQGTEQELISFIKSILPNYLQ.

Belongs to the tRNA nucleotidyltransferase/poly(A) polymerase family.

It localises to the mitochondrion. It is found in the cytoplasm. Its subcellular location is the nucleus. It catalyses the reaction a tRNA precursor + 2 CTP + ATP = a tRNA with a 3' CCA end + 3 diphosphate. Nucleotidyltransferase that catalyzes the addition and repair of the essential 3'-terminal CCA sequence in tRNAs, which is necessary for the attachment of amino acids to the 3' terminus of tRNA molecules, using CTP and ATP as substrates. tRNA 3'-terminal CCA addition is required both for tRNA processing and repair. Also involved in tRNA surveillance by mediating tandem CCA addition to generate a CCACCA at the 3' terminus of unstable tRNAs. While stable tRNAs receive only 3'-terminal CCA, unstable tRNAs are marked with CCACCA and rapidly degraded. The structural flexibility of RNA controls the choice between CCA versus CCACCA addition: following the first CCA addition cycle, nucleotide-binding to the active site triggers a clockwise screw motion, producing torque on the RNA. This ejects stable RNAs, whereas unstable RNAs are refolded while bound to the enzyme and subjected to a second CCA catalytic cycle. The polypeptide is CCA tRNA nucleotidyltransferase, mitochondrial (CCA1) (Candida glabrata (strain ATCC 2001 / BCRC 20586 / JCM 3761 / NBRC 0622 / NRRL Y-65 / CBS 138) (Yeast)).